Here is a 663-residue protein sequence, read N- to C-terminus: Protein LNK2 (663 aa).

Disordered regions lie at residues 528 to 549 (HYTS…VIPR) and 590 to 663 (MEGP…KRKL). Residues 602-629 (GTEEKGNFPKCSIRETHLTKQKAQKEEG) show a composition bias toward basic and acidic residues. Positions 639 to 648 (APNSGSSSTV) are enriched in polar residues.

Interacts with CCA1, LHY, REV4 and REV8, but not with PRR7 or PRR9. In terms of tissue distribution, expressed in roots, stems, leaves, seedlings, cotyledons, inflorescences and siliques. Highest expression in root tips, young leaves and vasculatur tissues.

It is found in the nucleus. Its function is as follows. Transcriptional coactivator necessary for expression of the clock genes PRR5 and TOC1. Antagonizes REV8 function in the regulation of anthocyanin accumulation. Involved in red light input to the clock. Activates clock-controlled genes with afternoon peak. Mediates light inhibition of hypocotyl elongation. Unable to bind to DNA, but recruited to the evening element (EE)-containing region of the PRR5 and TOC1 promoters through its interaction with the DNA binding proteins REV8 and REV4. The sequence is that of Protein LNK2 from Arabidopsis thaliana (Mouse-ear cress).